A 131-amino-acid polypeptide reads, in one-letter code: MKFSELAPRERHNFVYFLLFFFFYHFIMSAYFPFFPVWLADVNHLTKTETGIVFSSISLFAIIFQPVFGLMSDKLGLRKHLLWTITVLLILFAPFFIFVFSPLLQMNIIAGSLVGGIYLGIVFSTAPGVGS.

Residues 1-13 (MKFSELAPRERHN) are Cytoplasmic-facing. A helical membrane pass occupies residues 14–34 (FVYFLLFFFFYHFIMSAYFPF). The Periplasmic segment spans residues 35–50 (FPVWLADVNHLTKTET). Residues 51–71 (GIVFSSISLFAIIFQPVFGLM) form a helical membrane-spanning segment. At 72 to 80 (SDKLGLRKH) the chain is on the cytoplasmic side. Residues 81-101 (LLWTITVLLILFAPFFIFVFS) form a helical membrane-spanning segment. Position 102 (P102) is a topological domain, periplasmic. A helical membrane pass occupies residues 103–123 (LLQMNIIAGSLVGGIYLGIVF). The Cytoplasmic portion of the chain corresponds to 124 to 131 (STAPGVGS).

It belongs to the major facilitator superfamily. Oligosaccharide:H(+) symporter (OHS) (TC 2.A.1.5) family.

It is found in the cell inner membrane. It carries out the reaction lactose(in) + H(+)(in) = lactose(out) + H(+)(out). In terms of biological role, responsible for transport of beta-galactosides into the cell, with the concomitant import of a proton (symport system). This chain is Lactose permease (lacY), found in Klebsiella pneumoniae.